Reading from the N-terminus, the 322-residue chain is Serine/threonine-protein phosphatase PP1-2 (322 aa).

Mn(2+) is bound by residues aspartate 60, histidine 62, aspartate 88, and asparagine 120. The Proton donor role is filled by histidine 121. Residues histidine 169 and histidine 244 each contribute to the Mn(2+) site. The interval 298-322 (RQRVSQSSIKESKSATNSLKKSKNN) is disordered. The segment covering 301–316 (VSQSSIKESKSATNSL) has biased composition (polar residues).

This sequence belongs to the PPP phosphatase family. PP-1 subfamily. Mn(2+) is required as a cofactor.

It carries out the reaction O-phospho-L-seryl-[protein] + H2O = L-seryl-[protein] + phosphate. It catalyses the reaction O-phospho-L-threonyl-[protein] + H2O = L-threonyl-[protein] + phosphate. Its function is as follows. Essential role in cell cycle control. PP1 is perhaps required for exit from mitosis. The protein is Serine/threonine-protein phosphatase PP1-2 (sds21) of Schizosaccharomyces pombe (strain 972 / ATCC 24843) (Fission yeast).